The chain runs to 164 residues: Aspartic proteinase nepenthesin-1 (164 aa).

One can recognise a Peptidase A1 domain in the interval 17 to 164; sequence YLMXLSIGTP…VSFVSAQCGA (148 aa). Residue Asp-35 is part of the active site. The N-linked (GlcNAc...) asparagine glycan is linked to Asn-93.

The protein belongs to the peptidase A1 family. Parenchymal cells surrounding the secretory glands.

The protein resides in the secreted. It carries out the reaction Similar to pepsin, but also cleaves on either side of Asp and at Lys-|-Arg.. Inhibited by pepstatin and by diazoacetyl-D,L-norleucine methyl ester (DAN) in the presence of Cu(2+) ions. In terms of biological role, extracellular proteinase found in the pitcher fluid of carnivorous plants. Digest prey for nitrogen uptake. This is Aspartic proteinase nepenthesin-1 from Nepenthes distillatoria (Pitcher plant).